The primary structure comprises 106 residues: Acylphosphatase-2 (106 aa).

The region spanning Ser-16 to Tyr-106 is the Acylphosphatase-like domain. Catalysis depends on residues Arg-31 and Asn-49. A Phosphoserine modification is found at Ser-100.

This sequence belongs to the acylphosphatase family.

It carries out the reaction an acyl phosphate + H2O = a carboxylate + phosphate + H(+). The polypeptide is Acylphosphatase-2 (Acyp2) (Mus musculus (Mouse)).